A 363-amino-acid polypeptide reads, in one-letter code: Ribonuclease P protein subunit p40 (363 aa).

In terms of assembly, component of nuclear RNase P and RNase MRP ribonucleoproteins. RNase P consists of a catalytic RNA moiety and about 10 protein subunits; POP1, POP4, POP5, POP7, RPP14, RPP21, RPP25, RPP30, RPP38 and RPP40. Within the RNase P complex, POP1, POP7 and RPP25 form the 'finger' subcomplex, POP5, RPP14, RPP40 and homodimeric RPP30 form the 'palm' subcomplex, and RPP21, POP4 and RPP38 form the 'wrist' subcomplex. All subunits of the RNase P complex interact with the catalytic RNA. Several subunits of RNase P are also part of the RNase MRP complex. RNase MRP consists of a catalytic RNA moiety and about 8 protein subunits; POP1, POP7, RPP25, RPP30, RPP38, RPP40 and possibly also POP4 and POP5.

It localises to the nucleus. Its subcellular location is the nucleolus. Its function is as follows. Component of ribonuclease P, a ribonucleoprotein complex that generates mature tRNA molecules by cleaving their 5'-ends. Also a component of the MRP ribonuclease complex, which cleaves pre-rRNA sequences. The sequence is that of Ribonuclease P protein subunit p40 (Rpp40) from Mus musculus (Mouse).